We begin with the raw amino-acid sequence, 873 residues long: Protein translocase subunit SecA (873 aa).

ATP-binding positions include Gln88, 106–110 (GEGKT), and Asp501. Residues Cys856, Cys858, Cys867, and His868 each contribute to the Zn(2+) site.

Belongs to the SecA family. As to quaternary structure, monomer and homodimer. Part of the essential Sec protein translocation apparatus which comprises SecA, SecYEG and auxiliary proteins SecDF-YajC and YidC. It depends on Zn(2+) as a cofactor.

It localises to the cell inner membrane. It is found in the cytoplasm. The enzyme catalyses ATP + H2O + cellular proteinSide 1 = ADP + phosphate + cellular proteinSide 2.. Its function is as follows. Part of the Sec protein translocase complex. Interacts with the SecYEG preprotein conducting channel. Has a central role in coupling the hydrolysis of ATP to the transfer of proteins into and across the cell membrane, serving both as a receptor for the preprotein-SecB complex and as an ATP-driven molecular motor driving the stepwise translocation of polypeptide chains across the membrane. This chain is Protein translocase subunit SecA, found in Anaplasma phagocytophilum (strain HZ).